We begin with the raw amino-acid sequence, 387 residues long: ATP phosphoribosyltransferase regulatory subunit (387 aa).

It belongs to the class-II aminoacyl-tRNA synthetase family. HisZ subfamily. In terms of assembly, heteromultimer composed of HisG and HisZ subunits.

Its subcellular location is the cytoplasm. The protein operates within amino-acid biosynthesis; L-histidine biosynthesis; L-histidine from 5-phospho-alpha-D-ribose 1-diphosphate: step 1/9. In terms of biological role, required for the first step of histidine biosynthesis. May allow the feedback regulation of ATP phosphoribosyltransferase activity by histidine. This chain is ATP phosphoribosyltransferase regulatory subunit, found in Methylobacillus flagellatus (strain ATCC 51484 / DSM 6875 / VKM B-1610 / KT).